Here is a 1024-residue protein sequence, read N- to C-terminus: MKFFALFIQRPVATTLLTLAITLSGVIGFSLLPVSPLPQVDYPVIMVSASMPGADPETMASSIATPLERALGRIAGVNEMTSTSSLGSTRIILQFDLSRDINGAARDVQAALNAAQSLLPSGMPNRPTYRKMNPSDAPIMIMTLTSDTFSQGQLYDFASTQLAQKIAQTEGVSDVSVGGSSLPAVRVELNPSALFNQGVSLDAVRQAISAANVRRPQGSIDSSEQHWQVQANDEIKTAEGYRPLIIHYNNGSPVRLQDVANIVDSVQDVRNAGMSDGKPAVLLVISREPGANIIATVDRIRAELPALRASIPASIELNIAQDRSPTIRASLDEVERSLVIAVALVILVVFLFLRSGRATLIPAVAVPVSLIGTFTAMYLCGFSLNNLSLMALTIATGFVVDDAIVVLENISRHLEAGVKPMVAALRGVREVGFTVLSMSISLVAVFIPLLLMEGLPGRLFREFAVTLSVAIGISLVISLTLTPMMCAHLLRAQPTGKQQRIRGFGKVLLAIQQGYGRSLNWVLGHTRWVMVVLLSTIALNVWLYISIPKTFFPEQDTGRMMGFIQADQSISFQAMQQKLKDFMKIVSADPAVDNVTGFTGGSRTNSGSMFISLKPLSERSETAQQVITRLRGKLAKEPGASLFLSPVQDIRVGGRQSNASYQFTLLADDLAALREWEPKVRAALSKLPELADVNSDQQDKGSEMALTYDRETMARLGIDVSDANALLNNAFGQRQISTIYQPLNQYKVVMEVAPQYTQDVSSLDKMFVINSNGQSIPLSYFAKWQPANAPLSVNHQGLSAASTISFNLPDGGSLSEATAAVERAMTELGVPSTVRGMFAGTAQVFQDTLKSQLWLIMAAIATVYIVLGILYESYVHPLTILSTLPSAGVGALLALELFDAPFSLIALIGIMLLIGIVKKNAIMMVDFALDAQRNGNLNARDAIFQASLLRFRPILMTTLAALFGALPLVISSGDGAELRQPLGITIVGGLVMSQLLTLYTTPVVYLYFDRLRSRFSKKPLMRLE.

A run of 12 helical transmembrane segments spans residues 12–32 (VATTLLTLAITLSGVIGFSLL), 333–353 (EVERSLVIAVALVILVVFLFL), 360–380 (LIPAVAVPVSLIGTFTAMYLC), 387–407 (LSLMALTIATGFVVDDAIVVL), 431–451 (VGFTVLSMSISLVAVFIPLLL), 463–483 (FAVTLSVAIGISLVISLTLTP), 528–548 (WVMVVLLSTIALNVWLYISIP), 853–873 (LWLIMAAIATVYIVLGILYES), 875–895 (VHPLTILSTLPSAGVGALLAL), 897–917 (LFDAPFSLIALIGIMLLIGIV), 953–973 (PILMTTLAALFGALPLVISSG), and 984–1004 (ITIVGGLVMSQLLTLYTTPVV).

Belongs to the resistance-nodulation-cell division (RND) (TC 2.A.6) family. MdtC subfamily. In terms of assembly, part of a tripartite efflux system composed of MdtA, MdtB and MdtC. MdtC forms a heteromultimer with MdtB.

The protein localises to the cell inner membrane. This is Multidrug resistance protein MdtC from Yersinia enterocolitica serotype O:8 / biotype 1B (strain NCTC 13174 / 8081).